Here is a 215-residue protein sequence, read N- to C-terminus: Late embryogenesis abundant protein 14 (215 aa).

2 disordered regions span residues methionine 1–glycine 129 and serine 190–glutamine 215. Basic and acidic residues-rich tracts occupy residues glycine 13–glycine 24, glutamate 32–alanine 41, glycine 54–alanine 81, and alanine 88–alanine 111. A compositionally biased stretch (polar residues) spans aspartate 192–glutamine 215.

It belongs to the LEA type 4 family. In terms of tissue distribution, expressed in the shoot apex and leaves. Expressed in dry seeds. Expressed in roots and leaves.

It localises to the nucleus. This chain is Late embryogenesis abundant protein 14, found in Oryza sativa subsp. japonica (Rice).